Here is a 282-residue protein sequence, read N- to C-terminus: 4-diphosphocytidyl-2-C-methyl-D-erythritol kinase (282 aa).

Residue Lys9 is part of the active site. Position 98 to 108 (98 to 108) interacts with ATP; it reads PMGGGLGGGSS. Asp140 is a catalytic residue.

Belongs to the GHMP kinase family. IspE subfamily. Homodimer.

It catalyses the reaction 4-CDP-2-C-methyl-D-erythritol + ATP = 4-CDP-2-C-methyl-D-erythritol 2-phosphate + ADP + H(+). It participates in isoprenoid biosynthesis; isopentenyl diphosphate biosynthesis via DXP pathway; isopentenyl diphosphate from 1-deoxy-D-xylulose 5-phosphate: step 3/6. Catalyzes the phosphorylation of the position 2 hydroxy group of 4-diphosphocytidyl-2C-methyl-D-erythritol. The chain is 4-diphosphocytidyl-2-C-methyl-D-erythritol kinase from Salmonella paratyphi B (strain ATCC BAA-1250 / SPB7).